Here is a 738-residue protein sequence, read N- to C-terminus: Phosphoribosylformylglycinamidine synthase subunit PurL (738 aa).

The active site involves His53. ATP is bound by residues Tyr56 and Lys95. Glu97 provides a ligand contact to Mg(2+). Substrate is bound by residues 98 to 101 (SHNH) and Arg120. Catalysis depends on His99, which acts as the Proton acceptor. Residue Asp121 participates in Mg(2+) binding. Gln244 contributes to the substrate binding site. Asp274 is a Mg(2+) binding site. 318 to 320 (ESQ) lines the substrate pocket. Residues Asp499 and Gly536 each coordinate ATP. Mg(2+) is bound at residue Asn537. Ser539 contacts substrate.

It belongs to the FGAMS family. In terms of assembly, monomer. Part of the FGAM synthase complex composed of 1 PurL, 1 PurQ and 2 PurS subunits.

It localises to the cytoplasm. The catalysed reaction is N(2)-formyl-N(1)-(5-phospho-beta-D-ribosyl)glycinamide + L-glutamine + ATP + H2O = 2-formamido-N(1)-(5-O-phospho-beta-D-ribosyl)acetamidine + L-glutamate + ADP + phosphate + H(+). The protein operates within purine metabolism; IMP biosynthesis via de novo pathway; 5-amino-1-(5-phospho-D-ribosyl)imidazole from N(2)-formyl-N(1)-(5-phospho-D-ribosyl)glycinamide: step 1/2. Part of the phosphoribosylformylglycinamidine synthase complex involved in the purines biosynthetic pathway. Catalyzes the ATP-dependent conversion of formylglycinamide ribonucleotide (FGAR) and glutamine to yield formylglycinamidine ribonucleotide (FGAM) and glutamate. The FGAM synthase complex is composed of three subunits. PurQ produces an ammonia molecule by converting glutamine to glutamate. PurL transfers the ammonia molecule to FGAR to form FGAM in an ATP-dependent manner. PurS interacts with PurQ and PurL and is thought to assist in the transfer of the ammonia molecule from PurQ to PurL. The polypeptide is Phosphoribosylformylglycinamidine synthase subunit PurL (Leuconostoc mesenteroides subsp. mesenteroides (strain ATCC 8293 / DSM 20343 / BCRC 11652 / CCM 1803 / JCM 6124 / NCDO 523 / NBRC 100496 / NCIMB 8023 / NCTC 12954 / NRRL B-1118 / 37Y)).